Reading from the N-terminus, the 433-residue chain is Acetylcholine receptor-like protein cup-4 (433 aa).

A signal peptide spans 1-24 (MKIIIFVCFILIFYLPIQKKHVNS). 2 N-linked (GlcNAc...) asparagine glycosylation sites follow: Asn-41 and Asn-68. Cysteines 178 and 192 form a disulfide. Residues Asn-237 and Asn-249 are each glycosylated (N-linked (GlcNAc...) asparagine). 4 helical membrane-spanning segments follow: residues 282–302 (EAAVVTPCIVVASLISMTFFI), 307–327 (STFLLMMLHFYVQLIFLHDLV), 337–357 (IPFCIKLIGILMYTNGLTLVL), and 413–433 (PIIGFVLIILLICMFFVCLLL).

Belongs to the ligand-gated ion channel (TC 1.A.9) family. Acetylcholine receptor (TC 1.A.9.1) subfamily. In terms of tissue distribution, expressed in coelomocytes.

The protein resides in the cytoplasmic vesicle membrane. Thought to regulate endocytosis in coelomocytes through modulation of phospholipase C activity. Possible acetylcholine receptor. The protein is Acetylcholine receptor-like protein cup-4 (cup-4) of Caenorhabditis elegans.